The following is a 210-amino-acid chain: Large ribosomal subunit protein uL4 (210 aa).

Positions 57-78 (VSGGGAKPWKQKGTGRARAGSN) are disordered.

Belongs to the universal ribosomal protein uL4 family. As to quaternary structure, part of the 50S ribosomal subunit.

One of the primary rRNA binding proteins, this protein initially binds near the 5'-end of the 23S rRNA. It is important during the early stages of 50S assembly. It makes multiple contacts with different domains of the 23S rRNA in the assembled 50S subunit and ribosome. Its function is as follows. Forms part of the polypeptide exit tunnel. The polypeptide is Large ribosomal subunit protein uL4 (Desulfovibrio desulfuricans (strain ATCC 27774 / DSM 6949 / MB)).